A 54-amino-acid chain; its full sequence is Ribulose bisphosphate carboxylase large chain (54 aa).

The propeptide occupies 1-2 (MS). Position 3 is an N-acetylproline (P3). K14 carries the N6,N6,N6-trimethyllysine modification.

The protein belongs to the RuBisCO large chain family. Type I subfamily. In terms of assembly, heterohexadecamer of 8 large chains and 8 small chains.

The protein resides in the plastid. The protein localises to the chloroplast. It carries out the reaction 2 (2R)-3-phosphoglycerate + 2 H(+) = D-ribulose 1,5-bisphosphate + CO2 + H2O. The enzyme catalyses D-ribulose 1,5-bisphosphate + O2 = 2-phosphoglycolate + (2R)-3-phosphoglycerate + 2 H(+). RuBisCO catalyzes two reactions: the carboxylation of D-ribulose 1,5-bisphosphate, the primary event in carbon dioxide fixation, as well as the oxidative fragmentation of the pentose substrate in the photorespiration process. Both reactions occur simultaneously and in competition at the same active site. The polypeptide is Ribulose bisphosphate carboxylase large chain (rbcL) (Colletia hystrix (Crucifixion thorn)).